An 853-amino-acid polypeptide reads, in one-letter code: DNA mismatch repair protein MutS (853 aa).

Position 613–620 (613–620) interacts with ATP; it reads GPNMGGKS.

It belongs to the DNA mismatch repair MutS family.

In terms of biological role, this protein is involved in the repair of mismatches in DNA. It is possible that it carries out the mismatch recognition step. This protein has a weak ATPase activity. The sequence is that of DNA mismatch repair protein MutS from Vibrio atlanticus (strain LGP32) (Vibrio splendidus (strain Mel32)).